The primary structure comprises 469 residues: Dihydrolipoyl dehydrogenase (469 aa).

FAD-binding positions include 40–48 (EKAVLGGVC), lysine 57, and alanine 120. Cysteine 48 and cysteine 53 are oxidised to a cystine. Residues 186–190 (GGGAI), glutamate 209, and 275–278 (AVGV) each bind NAD(+). FAD contacts are provided by aspartate 317 and alanine 325. The Proton acceptor role is filled by histidine 450.

Belongs to the class-I pyridine nucleotide-disulfide oxidoreductase family. In terms of assembly, homodimer. FAD is required as a cofactor.

The protein resides in the cytoplasm. The enzyme catalyses N(6)-[(R)-dihydrolipoyl]-L-lysyl-[protein] + NAD(+) = N(6)-[(R)-lipoyl]-L-lysyl-[protein] + NADH + H(+). Functionally, lipoamide dehydrogenase is a component of the alpha-ketoacid dehydrogenase complexes. This is Dihydrolipoyl dehydrogenase (lpd) from Chlorobaculum tepidum (strain ATCC 49652 / DSM 12025 / NBRC 103806 / TLS) (Chlorobium tepidum).